Here is a 185-residue protein sequence, read N- to C-terminus: Ribosome-recycling factor (185 aa).

It belongs to the RRF family.

The protein resides in the cytoplasm. Responsible for the release of ribosomes from messenger RNA at the termination of protein biosynthesis. May increase the efficiency of translation by recycling ribosomes from one round of translation to another. In Streptococcus suis (strain 98HAH33), this protein is Ribosome-recycling factor.